The sequence spans 147 residues: Nitric oxide reductase subunit C (147 aa).

A helical; Signal-anchor membrane pass occupies residues 13–29 (VFYGGSLFFIAVFVGLT). Residues Cys-59, Cys-62, and His-63 each contribute to the heme c site.

Heterodimer of cytochromes b (large subunit) and c (small subunit).

The protein localises to the cell membrane. Its function is as follows. Component of the anaerobic respiratory chain that transforms nitrate to dinitrogen (denitrification). This is Nitric oxide reductase subunit C (norC) from Cereibacter sphaeroides (strain ATCC 17025 / ATH 2.4.3) (Rhodobacter sphaeroides).